The chain runs to 510 residues: ATP synthase subunit alpha 1 (510 aa).

An ATP-binding site is contributed by 169 to 176 (GDRQTGKT).

Belongs to the ATPase alpha/beta chains family. F-type ATPases have 2 components, CF(1) - the catalytic core - and CF(0) - the membrane proton channel. CF(1) has five subunits: alpha(3), beta(3), gamma(1), delta(1), epsilon(1). CF(0) has three main subunits: a(1), b(2) and c(9-12). The alpha and beta chains form an alternating ring which encloses part of the gamma chain. CF(1) is attached to CF(0) by a central stalk formed by the gamma and epsilon chains, while a peripheral stalk is formed by the delta and b chains.

The protein resides in the cell inner membrane. The enzyme catalyses ATP + H2O + 4 H(+)(in) = ADP + phosphate + 5 H(+)(out). Functionally, produces ATP from ADP in the presence of a proton gradient across the membrane. The alpha chain is a regulatory subunit. The polypeptide is ATP synthase subunit alpha 1 (Marinomonas sp. (strain MWYL1)).